The chain runs to 199 residues: Holliday junction branch migration complex subunit RuvA (199 aa).

Residues 1–64 (MIAFLKGAVF…ENEFKLFGFL (64 aa)) form a domain I region. Residues 65-143 (DQDELRLFKT…ELKLVEVEKE (79 aa)) are domain II. The tract at residues 144-148 (QRPLL) is flexible linker. Residues 148–199 (LDELMEALEILGYSRSEVLPAIMDLNRNKQLGNIVEENIKLVLKAKAQEMRR) are domain III.

It belongs to the RuvA family. In terms of assembly, homotetramer. Forms an RuvA(8)-RuvB(12)-Holliday junction (HJ) complex. HJ DNA is sandwiched between 2 RuvA tetramers; dsDNA enters through RuvA and exits via RuvB. An RuvB hexamer assembles on each DNA strand where it exits the tetramer. Each RuvB hexamer is contacted by two RuvA subunits (via domain III) on 2 adjacent RuvB subunits; this complex drives branch migration. In the full resolvosome a probable DNA-RuvA(4)-RuvB(12)-RuvC(2) complex forms which resolves the HJ.

The protein resides in the cytoplasm. Its function is as follows. The RuvA-RuvB-RuvC complex processes Holliday junction (HJ) DNA during genetic recombination and DNA repair, while the RuvA-RuvB complex plays an important role in the rescue of blocked DNA replication forks via replication fork reversal (RFR). RuvA specifically binds to HJ cruciform DNA, conferring on it an open structure. The RuvB hexamer acts as an ATP-dependent pump, pulling dsDNA into and through the RuvAB complex. HJ branch migration allows RuvC to scan DNA until it finds its consensus sequence, where it cleaves and resolves the cruciform DNA. The chain is Holliday junction branch migration complex subunit RuvA from Syntrophomonas wolfei subsp. wolfei (strain DSM 2245B / Goettingen).